The following is a 327-amino-acid chain: Nucleotide-binding protein CYB_0992 (327 aa).

Residue 12 to 19 (GLTGAGKT) coordinates ATP.

It belongs to the RapZ-like family.

Functionally, displays ATPase and GTPase activities. The polypeptide is Nucleotide-binding protein CYB_0992 (Synechococcus sp. (strain JA-2-3B'a(2-13)) (Cyanobacteria bacterium Yellowstone B-Prime)).